We begin with the raw amino-acid sequence, 572 residues long: NADP-dependent malic enzyme (572 aa).

At Met1 the chain carries N-acetylmethionine. Tyr102 functions as the Proton donor in the catalytic mechanism. NADP(+) is bound at residue Arg155. Lys173 functions as the Proton acceptor in the catalytic mechanism. Positions 245, 246, and 269 each coordinate a divalent metal cation. NADP(+) contacts are provided by residues Asp269 and 301 to 318; that span reads GAGEAALGIAHLVVMAME. Phosphoserine is present on Ser336.

This sequence belongs to the malic enzymes family. In terms of assembly, homotetramer. The cofactor is Mg(2+). Mn(2+) is required as a cofactor.

The protein resides in the cytoplasm. It carries out the reaction (S)-malate + NADP(+) = pyruvate + CO2 + NADPH. The catalysed reaction is oxaloacetate + H(+) = pyruvate + CO2. In terms of biological role, catalyzes the oxidative decarboxylation of (S)-malate in the presence of NADP(+) and divalent metal ions, and decarboxylation of oxaloacetate. The chain is NADP-dependent malic enzyme (Me1) from Mus musculus (Mouse).